The sequence spans 103 residues: N(4)-acetylcytidine amidohydrolase (103 aa).

One can recognise an ASCH domain in the interval 6–94; it reads ITFFQRFQDD…IAGIYPDQTQ (89 aa). Residue Lys21 is the Proton acceptor of the active site. Thr24 (nucleophile) is an active-site residue. The Proton donor role is filled by Glu74.

Belongs to the N(4)-acetylcytidine amidohydrolase family.

It carries out the reaction N(4)-acetylcytidine + H2O = cytidine + acetate + H(+). The enzyme catalyses N(4)-acetyl-2'-deoxycytidine + H2O = 2'-deoxycytidine + acetate + H(+). The catalysed reaction is N(4)-acetylcytosine + H2O = cytosine + acetate + H(+). Functionally, catalyzes the hydrolysis of N(4)-acetylcytidine (ac4C). The sequence is that of N(4)-acetylcytidine amidohydrolase from Citrobacter koseri (strain ATCC BAA-895 / CDC 4225-83 / SGSC4696).